A 123-amino-acid polypeptide reads, in one-letter code: U7 snRNA-associated Sm-like protein LSm10 (123 aa).

The 73-residue stretch at 16 to 88 (SLIILLQGLQ…VRYVHIPDDV (73 aa)) folds into the Sm domain.

The protein belongs to the snRNP Sm proteins family. Component of the heptameric ring U7 snRNP complex, or U7 Sm protein core complex, at least composed of LSM10, LSM11, SNRPB, SNRPD3, SNRPE, SNRPF, SNRPG and U7 snRNA. Formation of the U7 snRNP is an ATP-dependent process mediated by a specialized SMN complex containing at least the Sm protein core complex and additionally, the U7-specific LSM10 and LSM11 proteins. Interacts with CLNS1A and SMN. Post-translationally, not methylated. Methylation is not necessary for interaction with SMN.

Its subcellular location is the nucleus. In terms of biological role, appears to function in the U7 snRNP complex that is involved in histone 3'-end processing. Increases U7 snRNA levels but not histone 3'-end pre-mRNA processing activity, when overexpressed. Required for cell cycle progression from G1 to S phases. Binds specifically to U7 snRNA. Binds to the downstream cleavage product (DCP) of histone pre-mRNA in a U7 snRNP dependent manner. The sequence is that of U7 snRNA-associated Sm-like protein LSm10 (LSM10) from Homo sapiens (Human).